We begin with the raw amino-acid sequence, 391 residues long: Succinate--CoA ligase [GDP-forming] subunit beta, mitochondrial (391 aa).

The ATP-grasp domain occupies 5–233 (KKIMADHGVT…NAEFRQKEIF (229 aa)). GTP is bound by residues Gln-16, 49–51 (GRG), and Leu-105. Mg(2+) is bound by residues Asn-202 and Asp-216. Residues Asn-267 and 324–326 (GIV) contribute to the substrate site.

The protein belongs to the succinate/malate CoA ligase beta subunit family. GTP-specific subunit beta subfamily. As to quaternary structure, heterodimer of an alpha and a beta subunit. The beta subunit determines specificity for GTP. Mg(2+) serves as cofactor. As to expression, widely expressed. Not present in breast muscle.

Its subcellular location is the mitochondrion. It carries out the reaction GTP + succinate + CoA = succinyl-CoA + GDP + phosphate. The protein operates within carbohydrate metabolism; tricarboxylic acid cycle; succinate from succinyl-CoA (ligase route): step 1/1. In terms of biological role, GTP-specific succinyl-CoA synthetase functions in the citric acid cycle (TCA), coupling the hydrolysis of succinyl-CoA to the synthesis of GTP and thus represents the only step of substrate-level phosphorylation in the TCA. The beta subunit provides nucleotide specificity of the enzyme and binds the substrate succinate, while the binding sites for coenzyme A and phosphate are found in the alpha subunit. The sequence is that of Succinate--CoA ligase [GDP-forming] subunit beta, mitochondrial from Columba livia (Rock dove).